We begin with the raw amino-acid sequence, 488 residues long: Proline--tRNA ligase (488 aa).

The protein belongs to the class-II aminoacyl-tRNA synthetase family. ProS type 3 subfamily. In terms of assembly, homodimer.

It is found in the cytoplasm. The catalysed reaction is tRNA(Pro) + L-proline + ATP = L-prolyl-tRNA(Pro) + AMP + diphosphate. Functionally, catalyzes the attachment of proline to tRNA(Pro) in a two-step reaction: proline is first activated by ATP to form Pro-AMP and then transferred to the acceptor end of tRNA(Pro). The sequence is that of Proline--tRNA ligase from Borrelia garinii subsp. bavariensis (strain ATCC BAA-2496 / DSM 23469 / PBi) (Borreliella bavariensis).